We begin with the raw amino-acid sequence, 427 residues long: Tol-Pal system protein TolB (427 aa).

The N-terminal stretch at 1-23 is a signal peptide; it reads MKLLKRLVSVFAIVLAVGSNAFA.

The protein belongs to the TolB family. In terms of assembly, the Tol-Pal system is composed of five core proteins: the inner membrane proteins TolA, TolQ and TolR, the periplasmic protein TolB and the outer membrane protein Pal. They form a network linking the inner and outer membranes and the peptidoglycan layer.

The protein localises to the periplasm. Part of the Tol-Pal system, which plays a role in outer membrane invagination during cell division and is important for maintaining outer membrane integrity. This is Tol-Pal system protein TolB from Haemophilus influenzae (strain ATCC 51907 / DSM 11121 / KW20 / Rd).